The primary structure comprises 145 residues: D-aminoacyl-tRNA deacylase (145 aa).

A Gly-cisPro motif, important for rejection of L-amino acids motif is present at residues 137-138 (GP).

Belongs to the DTD family. As to quaternary structure, homodimer.

The protein resides in the cytoplasm. The catalysed reaction is glycyl-tRNA(Ala) + H2O = tRNA(Ala) + glycine + H(+). The enzyme catalyses a D-aminoacyl-tRNA + H2O = a tRNA + a D-alpha-amino acid + H(+). Functionally, an aminoacyl-tRNA editing enzyme that deacylates mischarged D-aminoacyl-tRNAs. Also deacylates mischarged glycyl-tRNA(Ala), protecting cells against glycine mischarging by AlaRS. Acts via tRNA-based rather than protein-based catalysis; rejects L-amino acids rather than detecting D-amino acids in the active site. By recycling D-aminoacyl-tRNA to D-amino acids and free tRNA molecules, this enzyme counteracts the toxicity associated with the formation of D-aminoacyl-tRNA entities in vivo and helps enforce protein L-homochirality. This Teredinibacter turnerae (strain ATCC 39867 / T7901) protein is D-aminoacyl-tRNA deacylase.